Reading from the N-terminus, the 387-residue chain is Cystathionine beta-lyase (387 aa).

K204 carries the post-translational modification N6-(pyridoxal phosphate)lysine.

This sequence belongs to the trans-sulfuration enzymes family. Homotetramer. Pyridoxal 5'-phosphate serves as cofactor.

The protein localises to the cytoplasm. The enzyme catalyses L,L-cystathionine + H2O = L-homocysteine + pyruvate + NH4(+). It carries out the reaction an S-substituted L-cysteine + H2O = a thiol + pyruvate + NH4(+). The protein operates within amino-acid biosynthesis; L-methionine biosynthesis via de novo pathway; L-homocysteine from L-cystathionine: step 1/1. Its function is as follows. Catalyzes the cleavage of cystathionine to homocysteine, pyruvate and ammonia during methionine biosynthesis. In Coxiella burnetii (strain RSA 493 / Nine Mile phase I), this protein is Cystathionine beta-lyase (metC).